Here is a 226-residue protein sequence, read N- to C-terminus: Exosome complex component Rrp4 (226 aa).

An S1 motif domain is found at 61–135 (NDLVIGKVNS…RDPLVSISDR (75 aa)). Positions 141 to 200 (DSGVLMEISPSKVPRLIGKKGSMIQMIEEATDAAVTIGQNGWVVVSCESPEGLLKAKKAI) constitute a KH domain.

This sequence belongs to the RRP4 family. As to quaternary structure, component of the archaeal exosome complex. Forms a trimer of Rrp4 and/or Csl4 subunits. The trimer associates with a hexameric ring-like arrangement composed of 3 Rrp41-Rrp42 heterodimers.

The protein resides in the cytoplasm. Functionally, non-catalytic component of the exosome, which is a complex involved in RNA degradation. Increases the RNA binding and the efficiency of RNA degradation. Confers strong poly(A) specificity to the exosome. This is Exosome complex component Rrp4 from Nitrosopumilus maritimus (strain SCM1).